A 407-amino-acid chain; its full sequence is Peptidase T (407 aa).

H81 contacts Zn(2+). The active site involves D83. A Zn(2+)-binding site is contributed by D142. E176 functions as the Proton acceptor in the catalytic mechanism. Residues E177, D199, and H381 each coordinate Zn(2+).

This sequence belongs to the peptidase M20B family. Zn(2+) serves as cofactor.

Its subcellular location is the cytoplasm. The catalysed reaction is Release of the N-terminal residue from a tripeptide.. Its function is as follows. Cleaves the N-terminal amino acid of tripeptides. The polypeptide is Peptidase T (Streptococcus pneumoniae (strain Hungary19A-6)).